A 448-amino-acid chain; its full sequence is Protein kinase C and casein kinase substrate in neurons protein 2 (448 aa).

Residues 11–282 (VEVSSDSFWE…NIKTADAVED (272 aa)) enclose the F-BAR domain. The stretch at 25–274 (KRTVKRIDDG…NIYRELEQNI (250 aa)) forms a coiled coil. Residues 315-386 (SRREKKKASD…DTNPFDEDTS (72 aa)) form a disordered region. Positions 329–358 (TGINQTGDQVSQPNKHSSVSSYEKNQSYPT) are enriched in polar residues. The NPF1 signature appears at 367–369 (NPF). Residues 379 to 381 (NPF) carry the NPF2 motif. Residues 388 to 448 (VMEVRVRALY…YPANYVEPIQ (61 aa)) enclose the SH3 domain.

Belongs to the PACSIN family. Phosphorylated on serine residues. As to expression, detected in intestine, cardiac muscle, lung and brain (at protein level). Expressed in all tissues tested, including, gizzard, liver, cardiac muscle, skeletal muscle and skin.

It localises to the cytoplasm. The protein localises to the cytoskeleton. The protein resides in the cytoplasmic vesicle membrane. Its subcellular location is the cell projection. It is found in the ruffle membrane. It localises to the early endosome. The protein localises to the recycling endosome membrane. The protein resides in the cell membrane. Its subcellular location is the membrane. It is found in the caveola. It localises to the cell junction. The protein localises to the focal adhesion. Functionally, regulates the morphogenesis and endocytosis of caveolae. Lipid-binding protein that is able to promote the tubulation of the phosphatidic acid-containing membranes it preferentially binds. Plays a role in intracellular vesicle-mediated transport. Involved in the endocytosis of cell-surface receptors like the EGF receptor, contributing to its internalization in the absence of EGF stimulus. Essential for endothelial organization in sprouting angiogenesis, modulates CDH5-based junctions. Facilitates endothelial front-rear polarity during migration by recruiting EHD4 and MICALL1 to asymmetric adherens junctions between leader and follower cells. This Gallus gallus (Chicken) protein is Protein kinase C and casein kinase substrate in neurons protein 2 (PACSIN2).